Reading from the N-terminus, the 2442-residue chain is CREB-binding protein (2442 aa).

Disordered regions lie at residues 1 to 41 and 74 to 179; these read MAEN…NDLP and LRGG…CMNA. Ala2 is modified (N-acetylalanine). Residues 20-30 are compositionally biased toward polar residues; that stretch reads PGFSANDSTDF. A compositionally biased stretch (low complexity) spans 80 to 90; that stretch reads SSINPGIGNVS. At Ser121 the chain carries Phosphoserine. The segment covering 122–131 has biased composition (polar residues); the sequence is PLSQGDSSAP. Position 124 is a phosphoserine; by ATM (Ser124). The span at 136–150 shows a compositional bias: low complexity; that stretch reads QAASTSGPTPAASQA. Residues 151–172 show a composition bias toward polar residues; the sequence is LNPQAQKQVGLATSSPATSQTG. Arg220 bears the Omega-N-methylarginine mark. Residues 227 to 410 form an interaction with SRCAP region; it reads PTPAMQGASS…GKACQVAHCA (184 aa). The tract at residues 266-290 is disordered; it reads KMGITGNTSPFGQPFSQAGGQPMGA. Residues 270 to 284 show a composition bias toward polar residues; it reads TGNTSPFGQPFSQAG. The TAZ-type 1 zinc-finger motif lies at 347-433; the sequence is DPEKRKLIQQ…RHDCPVCLPL (87 aa). Residues His363, Cys367, Cys380, Cys385, His394, Cys398, Cys404, Cys409, His418, Cys422, Cys427, and Cys430 each coordinate Zn(2+). A KIX domain is found at 587–666; that stretch reads GVRKGWHEHV…KIYKIQKELE (80 aa). Residues Arg601 and Arg625 each carry the asymmetric dimethylarginine modification. Lys657 carries the N6-acetyllysine modification. Composition is skewed to polar residues over residues 794–805 and 814–823; these read LPQNQFPSSSGA and PAQTGVSQGQ. The disordered stretch occupies residues 794–1083; it reads LPQNQFPSSS…STSPSQPRKK (290 aa). Composition is skewed to pro residues over residues 844 to 860 and 876 to 885; these read PCPPVTQSPLHPTPPPA and GMTPPQPAAP. Low complexity-rich tracts occupy residues 886–929 and 937–952; these read TQPS…VTPQ and PSVATPQSSQQQPTPV. Residues 973–988 are compositionally biased toward polar residues; the sequence is PTPSSVASAETNSQQP. A Glycyl lysine isopeptide (Lys-Gly) (interchain with G-Cter in SUMO1) cross-link involves residue Lys998. Residues 1011-1021 show a composition bias toward basic and acidic residues; the sequence is GESKGEPRSEM. The residue at position 1014 (Lys1014) is an N6-acetyllysine. At Ser1030 the chain carries Phosphoserine. The span at 1032 to 1059 shows a compositional bias: basic and acidic residues; that stretch reads VKEETDIAEQKSEPMEVDEKKPEVKVEV. Glycyl lysine isopeptide (Lys-Gly) (interchain with G-Cter in SUMO1) cross-links involve residues Lys1033 and Lys1056. Low complexity predominate over residues 1066-1078; it reads SSNGTASQSTSPS. Ser1076 is subject to Phosphoserine. Residues 1085–1192 enclose the Bromo domain; that stretch reads FKPEELRQAL…EVFEQEIDPV (108 aa). Positions 1124–1170 are interaction with histone; it reads DYFDIVKNPMDLSTIKRKLDTGQYQEPWQYVDDVWLMFNNAWLYNRK. The segment at 1162–1180 is interaction with ASF1A; sequence NNAWLYNRKTSRVYKFCSK. Lys1216 is subject to N6-acetyllysine. The CBP/p300-type HAT domain maps to 1323–1700; it reads KFSAKRLQTT…MLVELHTQGQ (378 aa). Ser1382 and Ser1386 each carry phosphoserine; by IKKA. Residues 1433–1435 form an interaction with histone region; it reads YLD. Residues 1434-1436, 1446-1447, Ile1493, Arg1498, and Trp1502 each bind acetyl-CoA; these read LDS and RT. The tract at residues 1460-1891 is interaction with TRERF1; sequence YVKKLGYVTG…LPSPTSAPPG (432 aa). The span at 1556–1568 shows a compositional bias: basic and acidic residues; sequence LEQEEEERKKEES. A disordered region spans residues 1556 to 1615; the sequence is LEQEEEERKKEESTAASETTEGSQGDSKNAKKKNNKKTNKNKSSISRANKKKPSMPNVSN. Lys1583, Lys1591, Lys1592, Lys1595, and Lys1597 each carry N6-acetyllysine. The segment covering 1585–1595 has biased composition (basic residues); that stretch reads AKKKNNKKTNK. The segment at 1702–1750 adopts a ZZ-type zinc-finger fold; it reads RFVYTCNECKHHVETRWHCTVCEDYDLCINCYNTKSHAHKMVKWGLGLD. Residues Cys1707, Cys1710, Cys1720, Cys1723, Cys1729, Cys1732, His1738, and His1740 each coordinate Zn(2+). Lys1741 and Lys1744 each carry N6-acetyllysine. The residue at position 1763 (Ser1763) is a Phosphoserine. The TAZ-type 2 zinc-finger motif lies at 1765-1846; it reads QESRRLSIQR…KCPVPFCLNI (82 aa). Disordered stretches follow at residues 1874-1959 and 1977-2028; these read TRNV…VEAA and INNS…PLPQ. Residues 1900–1912 are compositionally biased toward pro residues; that stretch reads PQTPQPPAQPQPS. Polar residues predominate over residues 1925-1940; that stretch reads ARTQPPTTVSTGKPTS. A compositionally biased stretch (pro residues) spans 1943 to 1954; the sequence is PAPPPPAQPPPA. The segment covering 2018–2027 has biased composition (low complexity); sequence PGQWQQAPLP. Residues Ser2063, Ser2076, and Ser2079 each carry the phosphoserine modification. Low complexity-rich tracts occupy residues 2112 to 2137, 2146 to 2160, 2196 to 2219, 2228 to 2263, and 2294 to 2305; these read QPGMQPQPGLQSQPGMQPQPGMHQQP, QAGVPRPGVPPQQQA, QLLQQQQQQQQQQQQQQQQQQGSA, HGQFQQPQGPGGYPPAMQQQQRMQQHLPLQGSSMGQ, and RILQQQQMKQQI. 2 disordered regions span residues 2112–2263 and 2294–2433; these read QPGM…SMGQ and RILQ…TTGD. 2 stretches are compositionally biased toward polar residues: residues 2315–2327 and 2334–2343; these read SPQQHMLSGQPQA and QIATSLSNQV. Residues 2349–2372 are compositionally biased toward pro residues; it reads VQSPRPQSQPPHSSPSPRIQPQPS. Residue Ser2351 is modified to Phosphoserine. The segment covering 2411–2424 has biased composition (polar residues); it reads QLNTPSRSALSSEL.

As to quaternary structure, found in a complex containing NCOA2; NCOA3; IKKA; IKKB and IKBKG. Probably part of a complex with HIF1A and EP300. Interacts with GATA1; the interaction results in acetylation and enhancement of transcriptional activity of GATA1. Interacts with MAF and ZCCHC12. Interacts with DAXX; the interaction is dependent on CBP sumoylation and results in suppression of the transcriptional activity via recruitment of HDAC2 to DAXX. Interacts with phosphorylated CREB1. Interacts with CITED4 (C-terminal region). Interacts (via the TAZ-type 1 domain) with HIF1A. Interacts with SRCAP, CARM1, ELF3, MLLT7/FOXO4, N4BP2, NCOA1, NCOA3, NCOA6, PCAF, DDX5, DDX17, PELP1, PML, SMAD1, SMAD2, SMAD3, SPIB and TRERF1. Interacts with KLF1; the interaction results in acetylation of KLF1 and enhancement of its transcriptional activity. Interacts with MTDH. Interacts with NFATC4. Interacts with MAFG; the interaction acetylates MAFG in the basic region and stimulates NFE2 transcriptional activity through increasing its DNA-binding activity. Interacts with IRF2; the interaction acetylates IRF2 and regulates its activity on the H4 promoter. Interacts with IRF3 (when phosphorylated); forming the dsRNA-activated factor 1 (DRAF1), a complex which activates the transcription of the type I interferon genes. Interacts (via N-terminus) with SS18L1/CREST (via C-terminus). Interacts with MECOM. Interacts with CITED1 (via C-terminus). Interacts with FOXO1; the interaction acetylates FOXO1 and inhibits its transcriptional activity. Interacts with NPAS2, CLOCK and BMAL1. Interacts with ASF1A and ASF1B; this promotes histone acetylation. Interacts with acetylated TP53/p53 and with the acetylated histones H3 and H4. Interacts (via transactivation domain and C-terminus) with PCNA; the interaction occurs on chromatin in UV-irradiated damaged cells. Interacts with DHX9 (via N-terminus); this interaction mediates association with RNA polymerase II holoenzyme and stimulates CREB-dependent transcriptional activation. Interacts with SMAD4; negatively regulated by ZBTB7A. Interacts with DUX4 (via C-terminus). Forms a complex with KMT2A and CREB1. Interacts with DDX3X; this interaction may facilitate HNF4A acetylation. Interacts with MSX1; the interaction may inhibit MSX1 autoinactivation. Interacts with ACSS2. In terms of assembly, (Microbial infection) Interacts with HTLV-1 Tax, p30II and HBZ. (Microbial infection) Interacts with human herpes virus 8/HHV-8 protein vIRF-1; this interaction inhibits CREBBP binding to IRF3. As to quaternary structure, (Microbial infection) Interacts with HIV-1 Tat. Methylation of the KIX domain by CARM1 blocks association with CREB. This results in the blockade of CREB signaling, and in activation of apoptotic response. In terms of processing, phosphorylated by CHUK/IKKA at Ser-1382 and Ser-1386; these phosphorylations promote cell growth by switching the binding preference of CREBBP from TP53 to NF-kappa-B. Phosphorylated by _ at Ser-124 in response to DNA damage, promoting interaction with MRE11 and lactylation of MRE11. Post-translationally, sumoylation negatively regulates transcriptional activity via the recruitment of DAAX. Autoacetylation is required for binding to protein substrates, such as acetylated histones and acetylated TP53/p53. Autoacetylation is induced by glucose and fatty acids.

It is found in the cytoplasm. The protein localises to the nucleus. It carries out the reaction L-lysyl-[histone] + acetyl-CoA = N(6)-acetyl-L-lysyl-[histone] + CoA + H(+). The catalysed reaction is L-lysyl-[protein] + acetyl-CoA = N(6)-acetyl-L-lysyl-[protein] + CoA + H(+). It catalyses the reaction (S)-lactoyl-CoA + L-lysyl-[protein] = N(6)-[(S)-lactoyl]-L-lysyl-[protein] + CoA + H(+). Acetylates histones, giving a specific tag for transcriptional activation. Mediates acetylation of histone H3 at 'Lys-18' and 'Lys-27' (H3K18ac and H3K27ac, respectively). Also acetylates non-histone proteins, like DDX21, FBL, IRF2, MAFG, NCOA3, POLR1E/PAF53 and FOXO1. Binds specifically to phosphorylated CREB and enhances its transcriptional activity toward cAMP-responsive genes. Acts as a coactivator of ALX1. Acts as a circadian transcriptional coactivator which enhances the activity of the circadian transcriptional activators: NPAS2-BMAL1 and CLOCK-BMAL1 heterodimers. Acetylates PCNA; acetylation promotes removal of chromatin-bound PCNA and its degradation during nucleotide excision repair (NER). Acetylates POLR1E/PAF53, leading to decreased association of RNA polymerase I with the rDNA promoter region and coding region. Acetylates DDX21, thereby inhibiting DDX21 helicase activity. Acetylates FBL, preventing methylation of 'Gln-105' of histone H2A (H2AQ104me). In addition to protein acetyltransferase, can use different acyl-CoA substrates, such as lactoyl-CoA, and is able to mediate protein lactylation. Catalyzes lactylation of MRE11 in response to DNA damage, thereby promoting DNA double-strand breaks (DSBs) via homologous recombination (HR). Functions as a transcriptional coactivator for SMAD4 in the TGF-beta signaling pathway. This is CREB-binding protein from Homo sapiens (Human).